The chain runs to 289 residues: Zinc finger matrin-type protein 3 (289 aa).

The segment at 1–59 (MILLQHAGLPPPKRPSSSPPMSVAARSTGALQLPPQKPFGQEASLPLAGEEEPPKGGEQ) is disordered. Residues 9–18 (LPPPKRPSSS) show a composition bias toward pro residues. Matrin-type zinc fingers lie at residues 70–100 (LYCK…KLRN) and 147–177 (DYCK…RLRL). Residues 180–191 (AQSNSFSDSSEV) are compositionally biased toward polar residues. Residues 180–200 (AQSNSFSDSSEVGQRRTRKEG) are disordered. The Matrin-type 3 zinc finger occupies 246–276 (FYCSMCNVGAGEEVEFRQHLESKQHKSKVSE).

Interacts with dsRNA.

It is found in the nucleus. The protein resides in the nucleolus. Its function is as follows. Acts as a bona fide target gene of p53/TP53. May play a role in the TP53-dependent growth regulatory pathway. May contribute to TP53-mediated apoptosis by regulation of TP53 expression and translocation to the nucleus and nucleolus. This is Zinc finger matrin-type protein 3 from Bos taurus (Bovine).